Reading from the N-terminus, the 121-residue chain is Anther-specific protein SF2 (121 aa).

A signal peptide spans 1 to 21 (MANNSVSYLVLLLLVFVLAIS). Asn115 is a glycosylation site (N-linked (GlcNAc...) asparagine).

In terms of tissue distribution, epidermal anther cells.

Its subcellular location is the secreted. The protein localises to the cell wall. Anther-specific cell wall protein which could contribute to the cell wall architecture of epidermal anther cells via intermolecular disulfide bridges. This chain is Anther-specific protein SF2, found in Helianthus annuus (Common sunflower).